Reading from the N-terminus, the 511-residue chain is Acetylcholine receptor subunit alpha-type unc-38 (511 aa).

Positions 1–16 (MRSFWLFLLLLLFCIS) are cleaved as a signal peptide. Residues 17-261 (FIKLTEGNED…QLRRKPLFYT (245 aa)) lie on the Extracellular side of the membrane. Asn124 carries N-linked (GlcNAc...) asparagine glycosylation. Cys151 and Cys165 are disulfide-bonded. A glycan (N-linked (GlcNAc...) asparagine) is linked at Asn202. Cys238 and Cys239 are oxidised to a cystine. The next 3 membrane-spanning stretches (helical) occupy residues 262–282 (VNLVFPCVGISFLTILVFYLP), 291–311 (LCISILVALTIFFLLLTEIIP), and 324–344 (LLFTMVMVTLSVVVTVISLNL). Residues 345–464 (HFRTPTTHLM…WKYVAMVLDR (120 aa)) are Cytoplasmic-facing. The helical transmembrane segment at 465-485 (LFLLIFSIACFVGTVIILLRA) threads the bilayer.

This sequence belongs to the ligand-gated ion channel (TC 1.A.9) family. Acetylcholine receptor (TC 1.A.9.1) subfamily. As to quaternary structure, component of nicotinic acetylcholine receptor. In muscles, composed of 2 non-alpha subunits lev-1 and unc-29, and 3 alpha subunits unc-38, unc-63 and lev-8. In cholinergic motoneurons, composed of 2 non-alpha subunits acr-2 and acr-3, and 3 alpha subunits unc-38, unc-63 and acr-12.

The protein resides in the postsynaptic cell membrane. Its subcellular location is the cell membrane. Alpha subunit of nicotinic acetylcholine receptor (nAChR). Probably acts in cholinergic motoneurons to regulate presynaptic neurotransmitter release, thereby ensuring normal level of excitation of cholinergic motoneurons during locomotion. Involved in nAChR sensitivity to nicotine. The chain is Acetylcholine receptor subunit alpha-type unc-38 (unc-38) from Caenorhabditis elegans.